A 293-amino-acid polypeptide reads, in one-letter code: MPEGKIIKALSGFYYVQHEEGVTQCRGRGVFRKNKITPLVGDQVVFQADNPTEGYVLEVFDRKNELVRPPIANVDQAILVFSAVEPDFNPGLLDRFLVLIEYHNIKPIICISKMDLVDEKMKATVEAYANDYREMGYDVLFTSINTSESIDILKPYLENCVSVVAGQSGVGKSSMLNVLRPELELKTNDISSHLGRGKHTTRHVELIAIGSGLVADTPGFSSLDFIDIEVEDLTYCFPELKEASQYCKFRGCTHLSEPKCAVKAAVEEGKITEYRYKNYKQFVEEIRERKPRY.

A CP-type G domain is found at Lys63–Leu223. GTP contacts are provided by residues Ser112–Asp115 and Gly166–Ser174. Zn(2+)-binding residues include Cys247, Cys252, His254, and Cys260.

Belongs to the TRAFAC class YlqF/YawG GTPase family. RsgA subfamily. Monomer. Associates with 30S ribosomal subunit, binds 16S rRNA. The cofactor is Zn(2+).

Its subcellular location is the cytoplasm. In terms of biological role, one of several proteins that assist in the late maturation steps of the functional core of the 30S ribosomal subunit. Helps release RbfA from mature subunits. May play a role in the assembly of ribosomal proteins into the subunit. Circularly permuted GTPase that catalyzes slow GTP hydrolysis, GTPase activity is stimulated by the 30S ribosomal subunit. This chain is Small ribosomal subunit biogenesis GTPase RsgA, found in Bacillus cereus (strain ATCC 14579 / DSM 31 / CCUG 7414 / JCM 2152 / NBRC 15305 / NCIMB 9373 / NCTC 2599 / NRRL B-3711).